A 465-amino-acid polypeptide reads, in one-letter code: Phospholipase A1-II 5 (465 aa).

Serine 233 acts as the Acyl-ester intermediate in catalysis. Residues serine 233, aspartate 297, and histidine 336 each act as charge relay system in the active site.

It belongs to the AB hydrolase superfamily. Lipase family.

The protein localises to the cytoplasm. Acylhydrolase that catalyzes the hydrolysis of phospholipids at the sn-1 position. In Oryza sativa subsp. japonica (Rice), this protein is Phospholipase A1-II 5.